A 171-amino-acid chain; its full sequence is Iron-sulfur cluster assembly protein 1 (171 aa).

The transit peptide at 1–55 (MLRAGGRRLLAPGLRRVLGGGAAAPVAVGGAKAYHERVVDHYENPRNVGSFENDD) directs the protein to the mitochondrion.

This sequence belongs to the NifU family. As to quaternary structure, component of the core Fe-S cluster (ISC) assembly machinery. It depends on [2Fe-2S] cluster as a cofactor.

It localises to the mitochondrion matrix. It participates in cofactor biosynthesis; iron-sulfur cluster biosynthesis. Functionally, scaffold protein for the de novo synthesis of iron-sulfur (Fe-S) clusters within mitochondria, which is required for maturation of both mitochondrial and cytoplasmic [2Fe-2S] and [4Fe-4S] proteins. First, a [2Fe-2S] cluster is transiently assembled on the scaffold protein ISCU (ISU1, ISU2 or ISU3). In a second step, the cluster is released from ISCU, transferred to a glutaredoxin, followed by the formation of mitochondrial [2Fe-2S] proteins, the synthesis of [4Fe-4S] clusters and their target-specific insertion into the recipient apoproteins. Cluster assembly on ISCU depends on the function of the cysteine desulfurase complex NFS1-ISD11, which serves as the sulfur donor for cluster synthesis, the iron-binding protein frataxin as the putative iron donor, and the electron transfer chain comprised of ferredoxin reductase and ferredoxin, which receive their electrons from NADH. This is Iron-sulfur cluster assembly protein 1 from Oryza sativa subsp. japonica (Rice).